Reading from the N-terminus, the 262-residue chain is tRNA pseudouridine synthase A (262 aa).

Catalysis depends on D51, which acts as the Nucleophile. Y109 lines the substrate pocket.

It belongs to the tRNA pseudouridine synthase TruA family. Homodimer.

It catalyses the reaction uridine(38/39/40) in tRNA = pseudouridine(38/39/40) in tRNA. In terms of biological role, formation of pseudouridine at positions 38, 39 and 40 in the anticodon stem and loop of transfer RNAs. The chain is tRNA pseudouridine synthase A from Glaesserella parasuis serovar 5 (strain SH0165) (Haemophilus parasuis).